The chain runs to 235 residues: Large ribosomal subunit protein uL1 (235 aa).

Belongs to the universal ribosomal protein uL1 family. Part of the 50S ribosomal subunit.

Binds directly to 23S rRNA. The L1 stalk is quite mobile in the ribosome, and is involved in E site tRNA release. Its function is as follows. Protein L1 is also a translational repressor protein, it controls the translation of the L11 operon by binding to its mRNA. This is Large ribosomal subunit protein uL1 from Mycobacterium bovis (strain ATCC BAA-935 / AF2122/97).